Reading from the N-terminus, the 497-residue chain is Cytochrome P450 98A8 (497 aa).

Residues 2–19 traverse the membrane as a helical segment; it reads IIYLISLLPIIVATLMLY. Cys431 is a heme binding site.

Belongs to the cytochrome P450 family. It depends on heme as a cofactor. In terms of tissue distribution, strongly expressed in inflorescence tips, young flower buds, seeds, stamen, tapetum and pollen.

It is found in the membrane. Acts redundantly with CYP98A9 as tricoumaroylspermidine meta-hydroxylase. Also catalyzes the meta-hydroxylation of the three triferuloylspermidine phenolic rings. Unable to use 5-O-(4-coumaroyl) D-quinate or 5-O-(4-coumaroyl) shikimate as substrates. In Arabidopsis thaliana (Mouse-ear cress), this protein is Cytochrome P450 98A8 (CYP98A8).